The primary structure comprises 640 residues: MKYDFSTLSPDDFENLSRDLVGAETGVRFEAFTVGADDGMDGRHAKADGSIILQAKHYLRSGFSKLKSKMREERVSIDELAPQRYILTTSVPLTPANKATLTEIIGPSLVGPGDIFGADDLNGLLRSYPEIVKAHEGLWAHSTPVLEEVVTNAVRKAMAPAEVPKTLARLMPPPGAADAPIEPVKRDTIFIIKASPIDDEFTLWLAPKLEAEGYQVFADVLTLMPGERWRREITSALRHRAVKVLLLCRDSSLEDSSIQDDLDIALETGKELGDQRFVIPLRMETFRKIKGLGDTVAVDFVRNWGEGLLKLIDTLQRQKVQRSIDTMINPNWEIYRRRGAVPIIEVPERLTSNWLRVAEAPDFIRYFECSGSINKGRLQGAIDSYGHPCALVGGSGFLAFGGVPEIEMAFEAVGRFKLKHEIPLVEFTEGGFQRLRIDRQIASNLVVAMLKKAWFNYCKRNGFIEHGYSNGIGFHASPEQAPTGKRIPWGNQAEKKRSSMLRNSAKGHIWQFGVTAMPAFWPFWHFKLKSRVLFAQDNDTPAGLVVDDPKKLHRLRRSVCKGWRNKQWYGRLLAFLELLSGESAFVRLPLSETETFVIEASPMLFSSPVSTVLPNDLDDEDEELDDSTLGRPDSDEEGGE.

The 145-residue stretch at 184-328 folds into the TIR domain; the sequence is VKRDTIFIIK…KVQRSIDTMI (145 aa). The disordered stretch occupies residues 613-640; the sequence is LPNDLDDEDEELDDSTLGRPDSDEEGGE. The span at 616-626 shows a compositional bias: acidic residues; that stretch reads DLDDEDEELDD.

This is an uncharacterized protein from Sinorhizobium fredii (strain NBRC 101917 / NGR234).